A 366-amino-acid chain; its full sequence is Chorismate synthase (366 aa).

Positions 48 and 54 each coordinate NADP(+). Residues arginine 125–serine 127, asparagine 238–alanine 239, glycine 278, lysine 293–serine 297, and arginine 319 each bind FMN.

Belongs to the chorismate synthase family. In terms of assembly, homotetramer. FMNH2 serves as cofactor.

It catalyses the reaction 5-O-(1-carboxyvinyl)-3-phosphoshikimate = chorismate + phosphate. The protein operates within metabolic intermediate biosynthesis; chorismate biosynthesis; chorismate from D-erythrose 4-phosphate and phosphoenolpyruvate: step 7/7. Its function is as follows. Catalyzes the anti-1,4-elimination of the C-3 phosphate and the C-6 proR hydrogen from 5-enolpyruvylshikimate-3-phosphate (EPSP) to yield chorismate, which is the branch point compound that serves as the starting substrate for the three terminal pathways of aromatic amino acid biosynthesis. This reaction introduces a second double bond into the aromatic ring system. This chain is Chorismate synthase, found in Paraburkholderia xenovorans (strain LB400).